Reading from the N-terminus, the 822-residue chain is Fibroblast growth factor receptor 4 (822 aa).

A signal peptide spans 1–35 (MGVQKDSRDIRWNRTTRPLALLLCGLLAFSALSCA). 3 N-linked (GlcNAc...) asparagine glycosylation sites follow: Asn-13, Asn-72, and Asn-125. The Extracellular segment spans residues 36 to 388 (RTLPEGRKAN…AEGPETRYTD (353 aa)). Ig-like C2-type domains lie at 39 to 129 (PEGR…FTIS), 157 to 259 (PPYS…YLLD), and 268 to 368 (PILQ…AWLT). Cysteines 69 and 114 form a disulfide. The interval 136–166 (SGDDDDEDHGREDSAGDMGEDPPYSTSYRAP) is disordered. Cysteines 191 and 243 form a disulfide. Residues Asn-240, Asn-277, Asn-309, Asn-330, and Asn-341 are each glycosylated (N-linked (GlcNAc...) asparagine). A disulfide bond links Cys-290 and Cys-352. Residues 389 to 409 (IIIYTSGSLALLMAAVIVVLC) traverse the membrane as a helical segment. Over 410 to 822 (RMQLPPTKTH…HHTTTSMVGT (413 aa)) the chain is Cytoplasmic. The Protein kinase domain occupies 486–774 (LVLGKPLGEG…ILATVAEEYL (289 aa)). ATP is bound by residues 492–500 (LGEGCFGQV) and Lys-522. Asp-631 acts as the Proton acceptor in catalysis. Tyr-661, Tyr-662, and Tyr-773 each carry phosphotyrosine; by autocatalysis.

Belongs to the protein kinase superfamily. Tyr protein kinase family. Fibroblast growth factor receptor subfamily. In terms of processing, ubiquitinated. Subject to proteasomal degradation when not fully glycosylated. Post-translationally, autophosphorylated. Binding of FGF family members together with heparan sulfate proteoglycan or heparin promotes receptor dimerization and autophosphorylation on tyrosine residues. Autophosphorylation occurs in trans between the two FGFR molecules present in the dimer.

The protein localises to the cell membrane. The protein resides in the endosome. Its subcellular location is the endoplasmic reticulum. It carries out the reaction L-tyrosyl-[protein] + ATP = O-phospho-L-tyrosyl-[protein] + ADP + H(+). Present in an inactive conformation in the absence of bound ligand. Ligand binding leads to dimerization and activation by autophosphorylation on tyrosine residues. Its function is as follows. Tyrosine-protein kinase that acts as a cell-surface receptor for fibroblast growth factors and plays a role in the regulation of cell proliferation, differentiation and migration, and in regulation of lipid metabolism, bile acid biosynthesis, glucose uptake, vitamin D metabolism and phosphate homeostasis. Required for normal down-regulation of the expression of CYP7A1, the rate-limiting enzyme in bile acid synthesis, in response to FGF19. Phosphorylates PLCG1 and FRS2. Ligand binding leads to the activation of several signaling cascades. Activation of PLCG1 leads to the production of the cellular signaling molecules diacylglycerol and inositol 1,4,5-trisphosphate. Phosphorylation of FRS2 triggers recruitment of GRB2, GAB1, PIK3R1 and SOS1, and mediates activation of RAS, MAPK1/ERK2, MAPK3/ERK1 and the MAP kinase signaling pathway, as well as of the AKT1 signaling pathway. This Pleurodeles waltl (Iberian ribbed newt) protein is Fibroblast growth factor receptor 4 (FGFR4).